The following is a 795-amino-acid chain: Protein Jade-3 (795 aa).

Over residues 1–25 (MKRLRTPSSSDSSDNESPSTSFSSN) the composition is skewed to low complexity. The disordered stretch occupies residues 1-41 (MKRLRTPSSSDSSDNESPSTSFSSNKYGSKPGTPASAQKKP). The PHD-type 1 zinc finger occupies 201 to 251 (DVICDVCRSPDSEEGNDMVFCDKCNICVHQACYGIVKVPDGNWLCRTCVLG). The segment at 253–287 (TPQCLLCPKTGGAMKATRAGTKWAHVSCALWIPEV) adopts a C2HC pre-PHD-type zinc-finger fold. The PHD-type 2 zinc-finger motif lies at 311-367 (LICSLCKLKTGACIQCSVKNCTIPFHVTCAFEHSLEMKTILDEGDEVKFKSYCLKHS). Disordered stretches follow at residues 630–654 (HGQS…NGIL), 667–687 (AASE…SGFH), and 714–795 (FEKN…SVQR). 2 stretches are compositionally biased toward polar residues: residues 678-687 (SGKSQSSGFH) and 720-732 (KSSG…STER).

The protein belongs to the JADE family. As to quaternary structure, component of the HBO1 complex.

Scaffold subunit of some HBO1 complexes, which have a histone H4 acetyltransferase activity. The sequence is that of Protein Jade-3 (jade3) from Danio rerio (Zebrafish).